Reading from the N-terminus, the 134-residue chain is ATP synthase epsilon chain (134 aa).

The protein belongs to the ATPase epsilon chain family. In terms of assembly, F-type ATPases have 2 components, CF(1) - the catalytic core - and CF(0) - the membrane proton channel. CF(1) has five subunits: alpha(3), beta(3), gamma(1), delta(1), epsilon(1). CF(0) has three main subunits: a, b and c.

Its subcellular location is the cell membrane. In terms of biological role, produces ATP from ADP in the presence of a proton gradient across the membrane. The protein is ATP synthase epsilon chain (atpC) of Priestia megaterium (strain ATCC 12872 / QMB1551) (Bacillus megaterium).